The primary structure comprises 132 residues: Large ribosomal subunit protein bL19 (132 aa).

This sequence belongs to the bacterial ribosomal protein bL19 family.

In terms of biological role, this protein is located at the 30S-50S ribosomal subunit interface and may play a role in the structure and function of the aminoacyl-tRNA binding site. This is Large ribosomal subunit protein bL19 from Methylobacterium radiotolerans (strain ATCC 27329 / DSM 1819 / JCM 2831 / NBRC 15690 / NCIMB 10815 / 0-1).